We begin with the raw amino-acid sequence, 237 residues long: Ribonuclease 3 (237 aa).

One can recognise an RNase III domain in the interval 5 to 136 (VDELSARLGV…VIAALFLDQG (132 aa)). Residue Glu49 coordinates Mg(2+). Asp53 is a catalytic residue. Asp122 and Glu125 together coordinate Mg(2+). Residue Glu125 is part of the active site. One can recognise a DRBM domain in the interval 163-232 (DYKSRLQARI…ARAALDALEG (70 aa)). Residues 185-208 (IDRSGPEHRPEFTVEVRAGEERLG) are compositionally biased toward basic and acidic residues. A disordered region spans residues 185 to 237 (IDRSGPEHRPEFTVEVRAGEERLGTGKGPSKQAAEQAAARAALDALEGGTDGR). Residues 216-231 (QAAEQAAARAALDALE) show a composition bias toward low complexity.

The protein belongs to the ribonuclease III family. As to quaternary structure, homodimer. Requires Mg(2+) as cofactor.

It is found in the cytoplasm. The enzyme catalyses Endonucleolytic cleavage to 5'-phosphomonoester.. Its function is as follows. Digests double-stranded RNA. Involved in the processing of primary rRNA transcript to yield the immediate precursors to the large and small rRNAs (23S and 16S). Processes some mRNAs, and tRNAs when they are encoded in the rRNA operon. Processes pre-crRNA and tracrRNA of type II CRISPR loci if present in the organism. In Roseiflexus sp. (strain RS-1), this protein is Ribonuclease 3.